A 422-amino-acid polypeptide reads, in one-letter code: UDP-N-acetylglucosamine 1-carboxyvinyltransferase (422 aa).

Residue 22–23 participates in phosphoenolpyruvate binding; sequence KN. UDP-N-acetyl-alpha-D-glucosamine is bound at residue arginine 93. Residue cysteine 117 is the Proton donor of the active site. Cysteine 117 is modified (2-(S-cysteinyl)pyruvic acid O-phosphothioketal). UDP-N-acetyl-alpha-D-glucosamine is bound by residues 122 to 126, aspartate 308, and leucine 330; that span reads RPVDL.

It belongs to the EPSP synthase family. MurA subfamily.

The protein localises to the cytoplasm. The enzyme catalyses phosphoenolpyruvate + UDP-N-acetyl-alpha-D-glucosamine = UDP-N-acetyl-3-O-(1-carboxyvinyl)-alpha-D-glucosamine + phosphate. It functions in the pathway cell wall biogenesis; peptidoglycan biosynthesis. In terms of biological role, cell wall formation. Adds enolpyruvyl to UDP-N-acetylglucosamine. The protein is UDP-N-acetylglucosamine 1-carboxyvinyltransferase of Helicobacter pylori (strain HPAG1).